Reading from the N-terminus, the 457-residue chain is Multidrug resistance protein MdtK (457 aa).

12 consecutive transmembrane segments (helical) span residues 11 to 31 (LLAL…MGFV), 53 to 73 (IWLP…PVIA), 93 to 113 (WLAG…GYII), 127 to 147 (AVGY…FQVA), 160 to 180 (GMVM…IFIY), 189 to 209 (GGVG…LAMV), 243 to 263 (LPIA…ALLV), 276 to 296 (IALN…AAVT), 314 to 334 (AART…IFTV), 350 to 370 (VVTL…SDSI), 387 to 407 (IFYI…YILA), and 418 to 438 (PAGF…MMML).

The protein belongs to the multi antimicrobial extrusion (MATE) (TC 2.A.66.1) family. MdtK subfamily.

The protein localises to the cell inner membrane. Functionally, multidrug efflux pump that functions probably as a Na(+)/drug antiporter. The sequence is that of Multidrug resistance protein MdtK from Escherichia coli O17:K52:H18 (strain UMN026 / ExPEC).